A 205-amino-acid chain; its full sequence is Putative 3-methyladenine DNA glycosylase (205 aa).

It belongs to the DNA glycosylase MPG family.

This chain is Putative 3-methyladenine DNA glycosylase, found in Bacillus anthracis (strain A0248).